Consider the following 528-residue polypeptide: Putative galacturonosyltransferase 2 (528 aa).

The protein belongs to the glycosyltransferase 8 family.

It functions in the pathway glycan metabolism; pectin biosynthesis. Functionally, may be involved in pectin and/or xylans biosynthesis in cell walls. The sequence is that of Putative galacturonosyltransferase 2 (GAUT2) from Arabidopsis thaliana (Mouse-ear cress).